Here is a 631-residue protein sequence, read N- to C-terminus: NADPH oxidoreductase A (631 aa).

The Flavodoxin-like domain maps to 73–212 (ILILYGTEYG…CFDRYIDTVC (140 aa)). FMN is bound by residues 79-83 (TEYGL) and 160-191 (VLALGDRSYPHYCAAGKTLDKQFEEMGAKRFR). An FAD-binding FR-type domain is found at 247–480 (KKPYSSKLLV…INNNPDFRLP (234 aa)). Residue 249–299 (PYSSKLLVKRVLTKGDKVGIHLEFELGDSELKYVPGDALAILPDNAASEVS) coordinates FAD. 504-630 (QERKALGHTG…KEKRYQKDVW (127 aa)) is an NADP(+) binding site.

It depends on FAD as a cofactor. FMN serves as cofactor.

In terms of biological role, probable NADPH oxidoreductase that controls development beyond the mound stage. The polypeptide is NADPH oxidoreductase A (redA) (Dictyostelium discoideum (Social amoeba)).